A 273-amino-acid polypeptide reads, in one-letter code: Putative pyruvate, phosphate dikinase regulatory protein (273 aa).

ADP is bound at residue 153-160 (GVSRTSKS).

It belongs to the pyruvate, phosphate/water dikinase regulatory protein family. PDRP subfamily.

It catalyses the reaction N(tele)-phospho-L-histidyl/L-threonyl-[pyruvate, phosphate dikinase] + ADP = N(tele)-phospho-L-histidyl/O-phospho-L-threonyl-[pyruvate, phosphate dikinase] + AMP + H(+). It carries out the reaction N(tele)-phospho-L-histidyl/O-phospho-L-threonyl-[pyruvate, phosphate dikinase] + phosphate + H(+) = N(tele)-phospho-L-histidyl/L-threonyl-[pyruvate, phosphate dikinase] + diphosphate. Functionally, bifunctional serine/threonine kinase and phosphorylase involved in the regulation of the pyruvate, phosphate dikinase (PPDK) by catalyzing its phosphorylation/dephosphorylation. This chain is Putative pyruvate, phosphate dikinase regulatory protein, found in Ehrlichia ruminantium (strain Welgevonden).